The following is a 262-amino-acid chain: Pyridoxine 5'-phosphate synthase (262 aa).

Asn6 is a 3-amino-2-oxopropyl phosphate binding site. Position 8–9 (8–9) interacts with 1-deoxy-D-xylulose 5-phosphate; it reads DH. Arg17 contacts 3-amino-2-oxopropyl phosphate. His42 serves as the catalytic Proton acceptor. 1-deoxy-D-xylulose 5-phosphate-binding residues include Arg44 and His49. Glu69 functions as the Proton acceptor in the catalytic mechanism. Thr99 contacts 1-deoxy-D-xylulose 5-phosphate. His213 acts as the Proton donor in catalysis. Residues Gly214 and 235–236 contribute to the 3-amino-2-oxopropyl phosphate site; that span reads GH.

It belongs to the PNP synthase family. In terms of assembly, homooctamer; tetramer of dimers.

The protein localises to the cytoplasm. The catalysed reaction is 3-amino-2-oxopropyl phosphate + 1-deoxy-D-xylulose 5-phosphate = pyridoxine 5'-phosphate + phosphate + 2 H2O + H(+). The protein operates within cofactor biosynthesis; pyridoxine 5'-phosphate biosynthesis; pyridoxine 5'-phosphate from D-erythrose 4-phosphate: step 5/5. In terms of biological role, catalyzes the complicated ring closure reaction between the two acyclic compounds 1-deoxy-D-xylulose-5-phosphate (DXP) and 3-amino-2-oxopropyl phosphate (1-amino-acetone-3-phosphate or AAP) to form pyridoxine 5'-phosphate (PNP) and inorganic phosphate. This Wolinella succinogenes (strain ATCC 29543 / DSM 1740 / CCUG 13145 / JCM 31913 / LMG 7466 / NCTC 11488 / FDC 602W) (Vibrio succinogenes) protein is Pyridoxine 5'-phosphate synthase.